The following is a 168-amino-acid chain: Cell division inhibitor SulA (168 aa).

The tract at residues 105–111 (ALQTGNY) is ftsZ binding.

Belongs to the SulA family. Interacts with FtsZ. In terms of processing, is rapidly cleaved and degraded by the Lon protease once DNA damage is repaired.

In terms of biological role, component of the SOS system and an inhibitor of cell division. Accumulation of SulA causes rapid cessation of cell division and the appearance of long, non-septate filaments. In the presence of GTP, binds a polymerization-competent form of FtsZ in a 1:1 ratio, thus inhibiting FtsZ polymerization and therefore preventing it from participating in the assembly of the Z ring. This mechanism prevents the premature segregation of damaged DNA to daughter cells during cell division. In Erwinia pyrifoliae (strain DSM 12163 / CIP 106111 / Ep16/96), this protein is Cell division inhibitor SulA.